The chain runs to 153 residues: NAD(P)H-quinone oxidoreductase subunit N (153 aa).

The protein belongs to the complex I NdhN subunit family. In terms of assembly, NDH-1 can be composed of about 15 different subunits; different subcomplexes with different compositions have been identified which probably have different functions.

It is found in the cellular thylakoid membrane. The enzyme catalyses a plastoquinone + NADH + (n+1) H(+)(in) = a plastoquinol + NAD(+) + n H(+)(out). It carries out the reaction a plastoquinone + NADPH + (n+1) H(+)(in) = a plastoquinol + NADP(+) + n H(+)(out). Functionally, NDH-1 shuttles electrons from an unknown electron donor, via FMN and iron-sulfur (Fe-S) centers, to quinones in the respiratory and/or the photosynthetic chain. The immediate electron acceptor for the enzyme in this species is believed to be plastoquinone. Couples the redox reaction to proton translocation, and thus conserves the redox energy in a proton gradient. Cyanobacterial NDH-1 also plays a role in inorganic carbon-concentration. The protein is NAD(P)H-quinone oxidoreductase subunit N of Prochlorococcus marinus (strain MIT 9303).